The sequence spans 509 residues: Histidine--tRNA ligase, cytoplasmic (509 aa).

Residue Ala2 is modified to N-acetylalanine. The WHEP-TRS domain maps to 3–59 (ERAALEELVKLQGERVRGLKQQKASAELIEEEVAKLLKLKAQLGPDESKQKFVLKTP). Ser66 carries the post-translational modification Phosphoserine. L-histidine-binding positions include 130-132 (DLT), Arg157, Gln173, Asp177, Arg326, and 330-331 (YY). Ser356 bears the Phosphoserine mark.

Belongs to the class-II aminoacyl-tRNA synthetase family. Homodimer.

The protein resides in the cytoplasm. It catalyses the reaction tRNA(His) + L-histidine + ATP = L-histidyl-tRNA(His) + AMP + diphosphate + H(+). Its function is as follows. Catalyzes the ATP-dependent ligation of histidine to the 3'-end of its cognate tRNA, via the formation of an aminoacyl-adenylate intermediate (His-AMP). Plays a role in axon guidance. The protein is Histidine--tRNA ligase, cytoplasmic (HARS1) of Pongo abelii (Sumatran orangutan).